We begin with the raw amino-acid sequence, 476 residues long: Glycogen synthase (476 aa).

Residue Lys-15 coordinates ADP-alpha-D-glucose.

Belongs to the glycosyltransferase 1 family. Bacterial/plant glycogen synthase subfamily.

The catalysed reaction is [(1-&gt;4)-alpha-D-glucosyl](n) + ADP-alpha-D-glucose = [(1-&gt;4)-alpha-D-glucosyl](n+1) + ADP + H(+). Its pathway is glycan biosynthesis; glycogen biosynthesis. Its function is as follows. Synthesizes alpha-1,4-glucan chains using ADP-glucose. This Yersinia pseudotuberculosis serotype IB (strain PB1/+) protein is Glycogen synthase.